Consider the following 396-residue polypeptide: Elongation factor Tu (396 aa).

A tr-type G domain is found at 10–206 (KPHVNVGTIG…ALDTYIPTPE (197 aa)). A G1 region spans residues 19 to 26 (GHVDHGKT). A GTP-binding site is contributed by 19 to 26 (GHVDHGKT). Thr-26 provides a ligand contact to Mg(2+). The G2 stretch occupies residues 60-64 (GITIN). Positions 81 to 84 (DCPG) are G3. GTP is bound by residues 81–85 (DCPGH) and 136–139 (NKAD). Positions 136–139 (NKAD) are G4. The G5 stretch occupies residues 174–176 (SAK).

It belongs to the TRAFAC class translation factor GTPase superfamily. Classic translation factor GTPase family. EF-Tu/EF-1A subfamily. Monomer.

It is found in the cytoplasm. The enzyme catalyses GTP + H2O = GDP + phosphate + H(+). GTP hydrolase that promotes the GTP-dependent binding of aminoacyl-tRNA to the A-site of ribosomes during protein biosynthesis. The sequence is that of Elongation factor Tu from Bordetella bronchiseptica (strain ATCC BAA-588 / NCTC 13252 / RB50) (Alcaligenes bronchisepticus).